The sequence spans 81 residues: Photosystem I iron-sulfur center (81 aa).

4Fe-4S ferredoxin-type domains follow at residues 2 to 31 and 39 to 68; these read AHSVKIYDTCIGCTQCVRACPTDVLEMVPW and IASAPRTEDCVGCKRCESACPTDFLSVRVY. Residues Cys11, Cys14, Cys17, Cys21, Cys48, Cys51, Cys54, and Cys58 each contribute to the [4Fe-4S] cluster site.

In terms of assembly, the eukaryotic PSI reaction center is composed of at least 11 subunits. [4Fe-4S] cluster serves as cofactor.

The protein resides in the plastid. The protein localises to the chloroplast thylakoid membrane. The enzyme catalyses reduced [plastocyanin] + hnu + oxidized [2Fe-2S]-[ferredoxin] = oxidized [plastocyanin] + reduced [2Fe-2S]-[ferredoxin]. Apoprotein for the two 4Fe-4S centers FA and FB of photosystem I (PSI); essential for photochemical activity. FB is the terminal electron acceptor of PSI, donating electrons to ferredoxin. The C-terminus interacts with PsaA/B/D and helps assemble the protein into the PSI complex. Required for binding of PsaD and PsaE to PSI. PSI is a plastocyanin-ferredoxin oxidoreductase, converting photonic excitation into a charge separation, which transfers an electron from the donor P700 chlorophyll pair to the spectroscopically characterized acceptors A0, A1, FX, FA and FB in turn. This Physcomitrium patens (Spreading-leaved earth moss) protein is Photosystem I iron-sulfur center.